A 549-amino-acid polypeptide reads, in one-letter code: Probable glucomannan 4-beta-mannosyltransferase 4 (549 aa).

A helical transmembrane segment spans residues 35–55 (VAPVLQFAVWACMAMSVMLVL). Asp-151 is an active-site residue. The substrate site is built by Asp-210 and Asp-212. Asp-304 is a catalytic residue. The next 4 membrane-spanning stretches (helical) occupy residues 383 to 403 (VVAP…SVMV), 406 to 426 (VSIP…MNAI), 497 to 517 (IYIP…YDLV), and 523 to 543 (YYLY…GFAG).

Belongs to the glycosyltransferase 2 family. Plant cellulose synthase-like A subfamily.

It localises to the golgi apparatus membrane. The catalysed reaction is GDP-mannose + (glucomannan)n = GDP + (glucomannan)n+1.. In terms of biological role, probable mannan synthase which consists of a 4-beta-mannosyltransferase activity on mannan using GDP-mannose. The beta-1,4-mannan product is the backbone for galactomannan synthesis by galactomannan galactosyltransferase. Galactomannan is a noncellulosic polysaccharides of plant cell wall. The polypeptide is Probable glucomannan 4-beta-mannosyltransferase 4 (Oryza sativa subsp. japonica (Rice)).